Reading from the N-terminus, the 92-residue chain is Probable Fe(2+)-trafficking protein (92 aa).

This sequence belongs to the Fe(2+)-trafficking protein family.

Its function is as follows. Could be a mediator in iron transactions between iron acquisition and iron-requiring processes, such as synthesis and/or repair of Fe-S clusters in biosynthetic enzymes. The sequence is that of Probable Fe(2+)-trafficking protein from Shewanella loihica (strain ATCC BAA-1088 / PV-4).